The chain runs to 505 residues: Flagellin (505 aa).

Belongs to the bacterial flagellin family.

Its subcellular location is the secreted. The protein localises to the bacterial flagellum. In terms of biological role, flagellin is the subunit protein which polymerizes to form the filaments of bacterial flagella. In Salmonella enteritidis, this protein is Flagellin (fliC).